A 213-amino-acid polypeptide reads, in one-letter code: MDSVKIINAVKEARNSAKPRNFTQSVDLIINLKELDLSRPENRMKQQIVLPSGLGKEINIAVIAKGDLAAQAESMGLTVIRQEELEELGKNKKQAKKLANANQFFIAQADMMPIVGKSLGAVLGPRGKMPQPVPANANLKPLVERFGKTISINTRDKAFFQVYVGKESMSDEELAANIEAVLNTVARKYEKGLYHVKNAFTKLTMGASAPIEK.

It belongs to the universal ribosomal protein uL1 family. As to quaternary structure, part of the 50S ribosomal subunit.

Functionally, binds directly to 23S rRNA. Probably involved in E site tRNA release. In terms of biological role, protein L1 is also a translational repressor protein, it controls the translation of its operon by binding to its mRNA. This chain is Large ribosomal subunit protein uL1, found in Methanococcus voltae.